The following is a 489-amino-acid chain: F-box/LRR-repeat protein 7 (489 aa).

The span at 1-31 (MGANNGKQSGSEGKGSSSISSDLSSSTDQTS) shows a compositional bias: low complexity. The interval 1 to 76 (MGANNGKQSG…AVLNGSSTSS (76 aa)) is disordered. The span at 32 to 55 (TKAPKNAATSEDSDLSMRTVSTPS) shows a compositional bias: polar residues. Low complexity predominate over residues 64 to 76 (SSSAVLNGSSTSS). One can recognise an F-box domain in the interval 109-155 (GAPVDILPDHAFLQIFTHLPTNQLCRCARVCRRWYNLAWDPRLWRTI). 11 LRR repeats span residues 168-193 (LRVL…MVSG), 194-219 (CRRL…EVAG), 220-245 (CYNV…DVSG), 251-279 (CISL…DMTD), 280-305 (CFAL…YLRR), 306-331 (CVRL…SVSD), 332-357 (CRFI…SIAH), 358-383 (CSRI…NARG), 384-409 (CEGL…DIGK), 410-435 (CPLV…SLKS), and 436-461 (CESI…NVQD).

It belongs to the FBXL7 family. In terms of assembly, part of the SCF (SKP1-CUL1-F-box) E3 ubiquitin-protein ligase complex SCF(FBXL7).

Its subcellular location is the cytoplasm. The protein resides in the cytoskeleton. It is found in the microtubule organizing center. The protein localises to the centrosome. The protein operates within protein modification; protein ubiquitination. Its function is as follows. Substrate recognition component of a SCF (SKP1-CUL1-F-box protein) E3 ubiquitin-protein ligase complex which mediates the ubiquitination and subsequent proteasomal degradation of target proteins. This is F-box/LRR-repeat protein 7 (fbxl7) from Danio rerio (Zebrafish).